We begin with the raw amino-acid sequence, 477 residues long: Glycogen synthase (477 aa).

Lys15 contributes to the ADP-alpha-D-glucose binding site.

This sequence belongs to the glycosyltransferase 1 family. Bacterial/plant glycogen synthase subfamily.

It catalyses the reaction [(1-&gt;4)-alpha-D-glucosyl](n) + ADP-alpha-D-glucose = [(1-&gt;4)-alpha-D-glucosyl](n+1) + ADP + H(+). Its pathway is glycan biosynthesis; glycogen biosynthesis. Synthesizes alpha-1,4-glucan chains using ADP-glucose. The chain is Glycogen synthase from Shigella sonnei (strain Ss046).